Reading from the N-terminus, the 490-residue chain is MDLTFASLSEISEAVNNRSISAKEVTLHFLKRIENLNPKLNAFTSLNPQAVQEAEAVDARIANGEDVGLLAGVPFGIKEMFCTKGLTTTAGSKILENFVPPYDATAVARLKKSGIVVMGKLNQDEFAMGSSNETSFHGVVKNPWDLERVPGGSSGGSAAAQASRLVAGTLGTDTGGSIRQPASFCGIVGVKPTYGRVSRYGIVAYASSLDQAGPMVSSVRDAALTLEVISGFDPQDSTTTQKQVPAWSQNLKADVKGMKIGLMKEYMTGALDPDVQKTVENSVDTLKQLGAEIVEVSVPMTAFAVPVYYLVAASEASSNLSRYDGVKYGYRAEFKNLSAVDLEEFYSQTRGQAFGAEVKRRIMLGTYCLSSGYYDAFYNKAGQVRRLIMEQYLEAFKKCDVILSPVTTAPAFKIGERVSDPLAMYLNDIFTTSTNLAGLPGMSVPFGQSQSGLPIGIQLTAGHFEEQKMLNVAFALEGASLVKGKHPHVI.

Active-site charge relay system residues include Lys-78 and Ser-153. Ser-177 acts as the Acyl-ester intermediate in catalysis.

The protein belongs to the amidase family. GatA subfamily. As to quaternary structure, heterotrimer of A, B and C subunits.

It catalyses the reaction L-glutamyl-tRNA(Gln) + L-glutamine + ATP + H2O = L-glutaminyl-tRNA(Gln) + L-glutamate + ADP + phosphate + H(+). Functionally, allows the formation of correctly charged Gln-tRNA(Gln) through the transamidation of misacylated Glu-tRNA(Gln) in organisms which lack glutaminyl-tRNA synthetase. The reaction takes place in the presence of glutamine and ATP through an activated gamma-phospho-Glu-tRNA(Gln). The chain is Glutamyl-tRNA(Gln) amidotransferase subunit A from Bdellovibrio bacteriovorus (strain ATCC 15356 / DSM 50701 / NCIMB 9529 / HD100).